A 289-amino-acid chain; its full sequence is Elongation factor Ts (289 aa).

Residues 82–85 (TDFL) are involved in Mg(2+) ion dislocation from EF-Tu.

It belongs to the EF-Ts family.

The protein localises to the cytoplasm. Functionally, associates with the EF-Tu.GDP complex and induces the exchange of GDP to GTP. It remains bound to the aminoacyl-tRNA.EF-Tu.GTP complex up to the GTP hydrolysis stage on the ribosome. This Pseudomonas paraeruginosa (strain DSM 24068 / PA7) (Pseudomonas aeruginosa (strain PA7)) protein is Elongation factor Ts.